Reading from the N-terminus, the 70-residue chain is U2-agatoxin-Ao1l (70 aa).

Positions 1 to 20 (MRAIISLLLISAMVFSIIEA) are cleaved as a signal peptide. Residues 21–34 (VPEEEGLQLSEDER) constitute a propeptide that is removed on maturation. 3 disulfide bridges follow: Cys37/Cys53, Cys44/Cys58, and Cys52/Cys68. Leu69 carries the post-translational modification Leucine amide.

It belongs to the neurotoxin 01 (U2-agtx) family. As to expression, expressed by the venom gland.

It localises to the secreted. Its function is as follows. Insect active toxin causing rapid but reversible paralysis in crickets. No activity shown in mammals. Does not show effect on mammalian voltage-gated calcium channels. In Agelena orientalis (Funnel-web spider), this protein is U2-agatoxin-Ao1l.